The sequence spans 347 residues: Protein RecA (347 aa).

Residue 65–72 (GPESSGKT) coordinates ATP. The segment at 328-347 (SPAQPEAPAAGEKPEQEEEF) is disordered.

The protein belongs to the RecA family.

It localises to the cytoplasm. Its function is as follows. Can catalyze the hydrolysis of ATP in the presence of single-stranded DNA, the ATP-dependent uptake of single-stranded DNA by duplex DNA, and the ATP-dependent hybridization of homologous single-stranded DNAs. It interacts with LexA causing its activation and leading to its autocatalytic cleavage. The chain is Protein RecA from Vibrio parahaemolyticus serotype O3:K6 (strain RIMD 2210633).